Here is a 201-residue protein sequence, read N- to C-terminus: Ribonuclease HII (201 aa).

The region spanning 15–201 (AIIAGVDEAG…FAPIKAYGAP (187 aa)) is the RNase H type-2 domain. Residues Asp-21, Glu-22, and Asp-113 each contribute to the a divalent metal cation site.

This sequence belongs to the RNase HII family. Requires Mn(2+) as cofactor. The cofactor is Mg(2+).

It localises to the cytoplasm. It catalyses the reaction Endonucleolytic cleavage to 5'-phosphomonoester.. Its function is as follows. Endonuclease that specifically degrades the RNA of RNA-DNA hybrids. The polypeptide is Ribonuclease HII (Bordetella pertussis (strain Tohama I / ATCC BAA-589 / NCTC 13251)).